The sequence spans 347 residues: N-acetyl-gamma-glutamyl-phosphate reductase (347 aa).

The active site involves Cys152.

It belongs to the NAGSA dehydrogenase family. Type 1 subfamily.

Its subcellular location is the cytoplasm. The catalysed reaction is N-acetyl-L-glutamate 5-semialdehyde + phosphate + NADP(+) = N-acetyl-L-glutamyl 5-phosphate + NADPH + H(+). The protein operates within amino-acid biosynthesis; L-arginine biosynthesis; N(2)-acetyl-L-ornithine from L-glutamate: step 3/4. Its function is as follows. Catalyzes the NADPH-dependent reduction of N-acetyl-5-glutamyl phosphate to yield N-acetyl-L-glutamate 5-semialdehyde. This chain is N-acetyl-gamma-glutamyl-phosphate reductase, found in Neisseria meningitidis serogroup A / serotype 4A (strain DSM 15465 / Z2491).